Consider the following 706-residue polypeptide: Kinesin-like protein KIP2 (706 aa).

Low complexity-rich tracts occupy residues 1 to 28 (MIQK…QSPS) and 36 to 63 (SNLT…RSNS). Positions 1–139 (MIQKMSPSLR…QPRSNSHHGS (139 aa)) are disordered. Residues 102-493 (SITVTIRPKP…LRFASRAKNV (392 aa)) enclose the Kinesin motor domain. Polar residues predominate over residues 127-139 (RYSQPRSNSHHGS). 202–209 (GMTGSGKT) lines the ATP pocket. Residues 413–445 (VGSNIPSPSASGSSSSSGNATNNGTSPSNHIPY) are disordered. Over residues 414-441 (GSNIPSPSASGSSSSSGNATNNGTSPSN) the composition is skewed to low complexity. Coiled coils occupy residues 507-541 (NNDG…NIGE), 569-589 (MRAE…LLDK), and 612-689 (TLLE…RALK).

The protein belongs to the TRAFAC class myosin-kinesin ATPase superfamily. Kinesin family. As to quaternary structure, might be dimeric.

It is found in the cytoplasm. It localises to the cytoskeleton. Its function is as follows. Required for assembly of the mitotic spindle. This is Kinesin-like protein KIP2 (KIP2) from Saccharomyces cerevisiae (strain ATCC 204508 / S288c) (Baker's yeast).